A 255-amino-acid polypeptide reads, in one-letter code: Homeobox protein Hox-D4 (255 aa).

Residues 31–127 (EQGADYYGGG…PKQPPSGTAL (97 aa)) are disordered. Residues 94–107 (EPCPAPPAPPPAPL) are compositionally biased toward pro residues. Positions 133 to 138 (VYPWMK) match the Antp-type hexapeptide motif. A DNA-binding region (homeobox) is located at residues 154–213 (PKRSRTAYTRQQVLELEKEFHFNRYLTRRRRIEIAHTLCLSERQIKIWFQNRRMKWKKDH). Positions 212–255 (DHKLPNTKGRSSSSSSSSSCSSSVAPSQHLQPMAKDHHTDLTTL) are disordered. A compositionally biased stretch (low complexity) spans 222-234 (SSSSSSSSSCSSS). Residues 245 to 255 (AKDHHTDLTTL) show a composition bias toward basic and acidic residues.

It belongs to the Antp homeobox family. Deformed subfamily. Forms a DNA-binding heterodimer with transcription factor PBX1.

The protein resides in the nucleus. Functionally, sequence-specific transcription factor which is part of a developmental regulatory system that provides cells with specific positional identities on the anterior-posterior axis. The polypeptide is Homeobox protein Hox-D4 (HOXD4) (Homo sapiens (Human)).